Reading from the N-terminus, the 237-residue chain is Dihydroceramide fatty acyl 2-hydroxylase FAH1 (237 aa).

The next 2 helical transmembrane spans lie at 50-70 and 80-100; these read LTLT…VWCI and LPEI…FEYV. Zn(2+) is bound by residues His-102, His-107, His-123, His-126, and His-127. Helical transmembrane passes span 137–157 and 164–184; these read VFPP…AKAI and PALF…HYYL. 5 residues coordinate Zn(2+): His-181, His-185, His-201, His-204, and His-205.

Belongs to the sterol desaturase family. As to quaternary structure, interacts with CYTB5-A, CYTB5-B, CYTB5-C and CYTB5-D. Interacts indirectly with BI-1 via CYTB5-D. Zn(2+) serves as cofactor. As to expression, expressed in leaves, roots, flowers and seeds.

It localises to the endoplasmic reticulum membrane. The catalysed reaction is an N-(1,2-saturated acyl)sphinganine + 2 Fe(II)-[cytochrome b5] + O2 + 2 H(+) = an N-[(2'R)-hydroxyacyl]sphinganine + 2 Fe(III)-[cytochrome b5] + H2O. Functionally, fatty acid 2-hydroxylase involved in the alpha-hydroxylation of sphingolipid-associated very long-chain fatty acids (VLCFA). Probably involved in the resistance response to oxidative stress. In Arabidopsis thaliana (Mouse-ear cress), this protein is Dihydroceramide fatty acyl 2-hydroxylase FAH1.